A 390-amino-acid chain; its full sequence is Succinate--CoA ligase [ADP-forming] subunit beta (390 aa).

One can recognise an ATP-grasp domain in the interval 9 to 244 (KEIFRKYGVP…LDEEEPTEVE (236 aa)). ATP-binding positions include lysine 46, 53-55 (GRG), glutamate 99, alanine 102, and glutamate 107. 2 residues coordinate Mg(2+): asparagine 199 and aspartate 213. Residues asparagine 264 and 321-323 (GIV) each bind substrate.

It belongs to the succinate/malate CoA ligase beta subunit family. In terms of assembly, heterotetramer of two alpha and two beta subunits. Requires Mg(2+) as cofactor.

It carries out the reaction succinate + ATP + CoA = succinyl-CoA + ADP + phosphate. The enzyme catalyses GTP + succinate + CoA = succinyl-CoA + GDP + phosphate. It participates in carbohydrate metabolism; tricarboxylic acid cycle; succinate from succinyl-CoA (ligase route): step 1/1. In terms of biological role, succinyl-CoA synthetase functions in the citric acid cycle (TCA), coupling the hydrolysis of succinyl-CoA to the synthesis of either ATP or GTP and thus represents the only step of substrate-level phosphorylation in the TCA. The beta subunit provides nucleotide specificity of the enzyme and binds the substrate succinate, while the binding sites for coenzyme A and phosphate are found in the alpha subunit. This Nautilia profundicola (strain ATCC BAA-1463 / DSM 18972 / AmH) protein is Succinate--CoA ligase [ADP-forming] subunit beta.